Reading from the N-terminus, the 333-residue chain is Taste receptor type 2 member 38 (333 aa).

Residues 1 to 17 (MLTLTRIHTVSYEVRST) lie on the Extracellular side of the membrane. The chain crosses the membrane as a helical span at residues 18 to 38 (FLFISVLEFAVGFLTNAFVFL). The Cytoplasmic portion of the chain corresponds to 39–55 (VNFWDVVKRQPLSNSDC). The helical transmembrane segment at 56–76 (VLLCLSISRLFLHGLLFLSAI) threads the bilayer. Residues 77–94 (QLTHFQKLSEPLNHSYQA) are Extracellular-facing. Residues 95–115 (IIMLWMIANQANLWLAACLSL) form a helical membrane-spanning segment. At 116-142 (LYCSKLIRFSHTFLICLASWVSRKISQ) the chain is on the cytoplasmic side. A helical transmembrane segment spans residues 143 to 163 (MLLGIILCSCICTVLCVWCFF). The Extracellular portion of the chain corresponds to 164-190 (SRPHFTVTTVLFMNNNTRLNWQIKDLN). A glycan (N-linked (GlcNAc...) asparagine) is linked at N178. The chain crosses the membrane as a helical span at residues 191–211 (LFYSFLFCYLWSVPPFLLFLV). Topologically, residues 212-251 (SSGMLTVSLGRHMRTMKVYTRDSRDPSLEAHIKALKSLVS) are cytoplasmic. A helical transmembrane segment spans residues 252 to 272 (FFCFFVISSCAAFISVPLLIL). The Extracellular segment spans residues 273–276 (WRDK). A helical transmembrane segment spans residues 277-297 (IGVMVCVGIMAACPSGHAAVL). The Cytoplasmic portion of the chain corresponds to 298-333 (ISGNAKLRRAVTTILLWAQSSLKVRADHKADSRTLC).

This sequence belongs to the G-protein coupled receptor T2R family.

It localises to the membrane. Its function is as follows. Receptor that may play a role in the perception of bitterness and is gustducin-linked. May play a role in sensing the chemical composition of the gastrointestinal content. The activity of this receptor may stimulate alpha gustducin, mediate PLC-beta-2 activation and lead to the gating of TRPM5. This Pan troglodytes (Chimpanzee) protein is Taste receptor type 2 member 38 (TAS2R38).